Here is a 2453-residue protein sequence, read N- to C-terminus: Tyrosine-protein phosphatase non-receptor type 13 (2453 aa).

In terms of domain architecture, KIND spans 3-190; the sequence is VSLAEALEVR…SGTDPLSRSS (188 aa). The segment at 183–227 is disordered; it reads TDPLSRSSEQKPDRSQAIRDRLRGKGLPTGRSSTSDALDTHEAPL. Basic and acidic residues predominate over residues 190–205; it reads SEQKPDRSQAIRDRLR. Residue Ser-240 is modified to Phosphoserine. The disordered stretch occupies residues 253 to 285; the sequence is EDYLKDTPSDNNSRHEDSETFSSPYQFKTSTPQ. Over residues 256–270 the composition is skewed to basic and acidic residues; that stretch reads LKDTPSDNNSRHEDS. Polar residues predominate over residues 272 to 285; that stretch reads TFSSPYQFKTSTPQ. Residues Ser-297 and Ser-298 each carry the phosphoserine modification. The interval 429–457 is disordered; it reads SEASKRFESSSGLPGVDETGQTRPSRQYE. The segment covering 447–457 has biased composition (polar residues); that stretch reads TGQTRPSRQYE. Residues 458–493 are a coiled coil; sequence TSLEGNLINQDIMLRRQEEEMMQLQARMALRQSRLS. In terms of domain architecture, FERM spans 565-865; sequence RKVNIRLLSG…SQHKFQLQMR (301 aa). Phosphoserine occurs at positions 883, 890, 901, 904, and 907. Residues 944 to 957 show a composition bias toward basic and acidic residues; it reads KEKTDKASWEEKPR. Disordered stretches follow at residues 944–966 and 1007–1063; these read KEKT…YHDL and LAGL…VPFK. 2 positions are modified to phosphoserine: Ser-1021 and Ser-1025. Residues 1025–1034 show a composition bias toward basic and acidic residues; it reads SPERRNHESD. Low complexity predominate over residues 1049-1058; the sequence is SLPSSGKSSS. Position 1076 is a phosphoserine (Ser-1076). The PDZ 1 domain maps to 1084 to 1170; sequence LVNLKKDPKH…DVTLVISQPK (87 aa). Disordered regions lie at residues 1199–1356 and 1441–1478; these read DSAM…GDTF and GQVP…TPHV. At Ser-1221 the chain carries Phosphoserine. 2 stretches are compositionally biased toward polar residues: residues 1242–1252 and 1267–1279; these read ESASLSQSQVN and PQHS…VTTK. Ser-1270 is subject to Phosphoserine. Over residues 1297–1315 the composition is skewed to basic and acidic residues; it reads GISDLIEHLDCADSDKDDS. The segment covering 1331–1341 has biased composition (low complexity); it reads SSSLSTSNKTS. The PDZ 2 domain occupies 1357 to 1442; that stretch reads EVELAKTDGS…VVHLLLEKGQ (86 aa). The span at 1467–1478 shows a compositional bias: basic and acidic residues; sequence APEKVAKQTPHV. One can recognise a PDZ 3 domain in the interval 1491–1579; the sequence is EVKLFKNSSG…EVSLLLCRPA (89 aa). Polar residues predominate over residues 1602–1629; it reads LNSSKETSQPSSSVEQGASSDDNGVSGK. Disordered regions lie at residues 1602–1662 and 1695–1726; these read LNSS…AKMP and KLES…SDAT. A compositionally biased stretch (basic and acidic residues) spans 1638–1655; sequence SRRESYSDHSESGEDDSV. 2 consecutive PDZ domains span residues 1764 to 1845 and 1857 to 1942; these read LITL…GRIL and LPDI…TRDG. Disordered regions lie at residues 1991–2024 and 2051–2139; these read EAVC…DDIY and RHAT…DPPF. Basic and acidic residues predominate over residues 2012 to 2021; sequence ETKESNSRDD. The Tyrosine-protein phosphatase domain maps to 2180 to 2434; that stretch reads PSKELENLQE…VFCYQVILYV (255 aa). Substrate-binding positions include Asp-2345, 2375 to 2381, and Gln-2419; that span reads CSAGIGR. The active-site Phosphocysteine intermediate is Cys-2375.

It belongs to the protein-tyrosine phosphatase family. Non-receptor class subfamily. As to quaternary structure, interacts (via the first PDZ domain) with PLEKHA1 and PLEKHA2. Interacts (via the second PDZ domain) with TNFRSF6 (Fas receptor) (via C-terminus). Interacts (via the second PDZ domain) with TRIP6 (via the third LIM domain and C-terminus). Interacts (via the third PDZ domain) with NGFR (via C-terminal SVP motif) and PKN2 (via C-terminus). Interacts (via the second or fourth PDZ domains) with PDLIM4 (via C-terminus only or via combined C-terminus and LIM domain, but not LIM domain only). Found in a complex with PDLIM4 and TRIP6. Interacts with PDLIM4; this interaction results in dephosphorylation of SRC 'Tyr-419' by this protein leading to its inactivation. Interacts with BRD7. Interacts with RAPGEF6. Interacts with ARHGAP29. Interacts with PIK3R2; dephosphorylates PIK3R2. Interacts with FBXL2. Interacts (via the FERM domain) with ENTR1. Found in a complex with ENTR1, PTPN13 and GIT1. In terms of tissue distribution, expressed predominantly in kidney and, to a lesser extent, in lung, heart, brain and testis.

The protein resides in the cytoplasm. The protein localises to the cytoskeleton. Its subcellular location is the nucleus. It is found in the cell projection. It localises to the lamellipodium. The catalysed reaction is O-phospho-L-tyrosyl-[protein] + H2O = L-tyrosyl-[protein] + phosphate. In terms of biological role, tyrosine phosphatase which negatively regulates FAS-induced apoptosis and NGFR-mediated pro-apoptotic signaling. May regulate phosphoinositide 3-kinase (PI3K) signaling through dephosphorylation of PIK3R2. This is Tyrosine-protein phosphatase non-receptor type 13 (Ptpn13) from Mus musculus (Mouse).